Here is a 375-residue protein sequence, read N- to C-terminus: Homoserine O-succinyltransferase (375 aa).

The 311-residue stretch at 48–358 folds into the AB hydrolase-1 domain; sequence NAVLVCHALS…DAGHDSFLLD (311 aa). The Nucleophile role is filled by Ser-154. Arg-224 contacts substrate. Residues Asp-319 and His-352 contribute to the active site. Substrate is bound at residue Asp-353.

This sequence belongs to the AB hydrolase superfamily. MetX family. In terms of assembly, homodimer.

Its subcellular location is the cytoplasm. It carries out the reaction L-homoserine + succinyl-CoA = O-succinyl-L-homoserine + CoA. The protein operates within amino-acid biosynthesis; L-methionine biosynthesis via de novo pathway; O-succinyl-L-homoserine from L-homoserine: step 1/1. Transfers a succinyl group from succinyl-CoA to L-homoserine, forming succinyl-L-homoserine. The chain is Homoserine O-succinyltransferase from Aromatoleum aromaticum (strain DSM 19018 / LMG 30748 / EbN1) (Azoarcus sp. (strain EbN1)).